The primary structure comprises 151 residues: UPF0251 protein Ctha_0452 (151 aa).

It belongs to the UPF0251 family.

The polypeptide is UPF0251 protein Ctha_0452 (Chloroherpeton thalassium (strain ATCC 35110 / GB-78)).